A 156-amino-acid chain; its full sequence is Cellulose synthase operon protein D (156 aa).

The protein operates within glycan metabolism; bacterial cellulose biosynthesis. Functionally, may have a major role in the perfection of crystallization, involved either in the pore structure itself or in the organization of the pores within the linear array of terminal synthesizing complexes (TCs). This Komagataeibacter xylinus (Gluconacetobacter xylinus) protein is Cellulose synthase operon protein D (bcsDI).